Here is a 136-residue protein sequence, read N- to C-terminus: Large ribosomal subunit protein uL16 (136 aa).

This sequence belongs to the universal ribosomal protein uL16 family. As to quaternary structure, part of the 50S ribosomal subunit.

Binds 23S rRNA and is also seen to make contacts with the A and possibly P site tRNAs. This is Large ribosomal subunit protein uL16 from Rickettsia felis (strain ATCC VR-1525 / URRWXCal2) (Rickettsia azadi).